The chain runs to 80 residues: Putative ankyrin repeat protein RC0877 (80 aa).

The ANK repeat unit spans residues 6-46 (SGGIPLHAVAKNVRCTSKDIKDYEIYKLLVSYGADINARVE).

The chain is Putative ankyrin repeat protein RC0877 from Rickettsia conorii (strain ATCC VR-613 / Malish 7).